Consider the following 420-residue polypeptide: 3-oxo-tetronate kinase (420 aa).

Residues Ser-258, 360–363 (GGET), and Gly-403 each bind ATP.

Belongs to the four-carbon acid sugar kinase family.

It carries out the reaction 3-dehydro-L-erythronate + ATP = 3-dehydro-4-O-phospho-L-erythronate + ADP + H(+). It catalyses the reaction 3-dehydro-D-erythronate + ATP = 3-dehydro-4-O-phospho-D-erythronate + ADP + H(+). Catalyzes the ATP-dependent phosphorylation of 3-oxo-tetronate to 3-oxo-tetronate 4-phosphate. The chain is 3-oxo-tetronate kinase from Salmonella typhimurium (strain LT2 / SGSC1412 / ATCC 700720).